A 77-amino-acid polypeptide reads, in one-letter code: Ribonuclease P protein component 1 (77 aa).

It belongs to the eukaryotic/archaeal RNase P protein component 1 family. Consists of a catalytic RNA component and at least 4-5 protein subunits.

It localises to the cytoplasm. It carries out the reaction Endonucleolytic cleavage of RNA, removing 5'-extranucleotides from tRNA precursor.. Its function is as follows. Part of ribonuclease P, a protein complex that generates mature tRNA molecules by cleaving their 5'-ends. The chain is Ribonuclease P protein component 1 from Sulfurisphaera tokodaii (strain DSM 16993 / JCM 10545 / NBRC 100140 / 7) (Sulfolobus tokodaii).